Consider the following 377-residue polypeptide: Nitric oxide reductase FlRd-NAD(+) reductase (377 aa).

The protein belongs to the FAD-dependent oxidoreductase family. FAD is required as a cofactor.

The protein resides in the cytoplasm. It carries out the reaction 2 reduced [nitric oxide reductase rubredoxin domain] + NAD(+) + H(+) = 2 oxidized [nitric oxide reductase rubredoxin domain] + NADH. It functions in the pathway nitrogen metabolism; nitric oxide reduction. One of at least two accessory proteins for anaerobic nitric oxide (NO) reductase. Reduces the rubredoxin moiety of NO reductase. This Escherichia coli O45:K1 (strain S88 / ExPEC) protein is Nitric oxide reductase FlRd-NAD(+) reductase.